Consider the following 347-residue polypeptide: uncharacterized protein (347 aa).

2 coiled-coil regions span residues 148-201 and 261-298; these read DQQS…EKDG and LENLTFRLNLINDLNKKEEEKEKEKEKEKEENSFDTFS. Positions 151–203 are disordered; sequence SISNLRKEEKEKQKENENENENENENENENEKENQELDKKVNQTNDNEKDGDE. Residues 155 to 167 show a composition bias toward basic and acidic residues; that stretch reads LRKEEKEKQKENE. Over residues 168–178 the composition is skewed to acidic residues; sequence NENENENENEN. Residues 179 to 191 show a composition bias toward basic and acidic residues; the sequence is ENEKENQELDKKV.

This is an uncharacterized protein from Dictyostelium discoideum (Social amoeba).